Reading from the N-terminus, the 295-residue chain is Dual specificity protein phosphatase 15 (295 aa).

Residues 1-141 (MTEGVLPGLY…LEEFGWASSQ (141 aa)) enclose the Tyrosine-protein phosphatase domain. A lipid anchor (N-myristoyl glycine) is attached at Thr-2. The active-site Phosphocysteine intermediate is the Cys-85. Residues 251 to 270 (SSSCTLSASTERPDGSSTPG) are compositionally biased toward polar residues. A disordered region spans residues 251 to 272 (SSSCTLSASTERPDGSSTPGNP).

The protein belongs to the protein-tyrosine phosphatase family. Non-receptor class dual specificity subfamily. In terms of tissue distribution, highly expressed in testis. Expressed in brain; up-regulated in patients with multiple sclerosis gray matter lesions.

It localises to the cytoplasm. Its subcellular location is the cell membrane. The enzyme catalyses O-phospho-L-tyrosyl-[protein] + H2O = L-tyrosyl-[protein] + phosphate. The catalysed reaction is O-phospho-L-seryl-[protein] + H2O = L-seryl-[protein] + phosphate. It carries out the reaction O-phospho-L-threonyl-[protein] + H2O = L-threonyl-[protein] + phosphate. In terms of biological role, may dephosphorylate MAPK13, ATF2, ERBB3, PDGFRB and SNX6. Functionally, may play a role in the regulation of oligodendrocyte differentiation. May play a role in the regulation of myelin formation. Involved in the regulation of Erk1/2 phosphorylation in Schwann cells; the signaling may be linked to the regulation of myelination. The polypeptide is Dual specificity protein phosphatase 15 (Homo sapiens (Human)).